A 167-amino-acid polypeptide reads, in one-letter code: Inclusion membrane protein G (167 aa).

2 helical membrane-spanning segments follow: residues 33 to 57 (VVLALSLFAVFASGSLSILSAAVLF) and 63 to 88 (VLPYLLILTTALLGCVYAVIVLLRSL). Residues 94–167 (SCKKRSPEEI…DNSRSRSRSF (74 aa)) form a sufficient for interaction with human 14-3-3 beta protein region. A disordered region spans residues 97 to 167 (KRSPEEIEGA…DNSRSRSRSF (71 aa)). Low complexity predominate over residues 122-135 (ESASPQASPTSSTL). Residues 161–166 (RSRSRS) carry the Phosphorylation-dependent binding motif motif. At S166 the chain carries Phosphoserine.

As to quaternary structure, in infected HeLa cells colocalizes with host 14-3-3 protein (YWHAB); phosphorylation of Ser-166 is probably required. Interacts with Pkn1. Post-translationally, phosphorylated, possibly at more than one position, in infected HeLa cells. Phosphorylated by chlamydial kinase Pnk1.

It is found in the secreted. The protein resides in the host vacuole. Its subcellular location is the host pathogen-containing vacuole. The protein localises to the host pathogen-containing vacuole membrane. Inclusion membrane protein probably involved in early modification events of the chlamydial inclusion. The sequence is that of Inclusion membrane protein G from Chlamydia trachomatis serovar L2 (strain ATCC VR-902B / DSM 19102 / 434/Bu).